We begin with the raw amino-acid sequence, 467 residues long: Protein arginine methyltransferase NDUFAF7 homolog, mitochondrial (467 aa).

The protein belongs to the NDUFAF7 family.

The protein localises to the mitochondrion. The enzyme catalyses L-arginyl-[protein] + 2 S-adenosyl-L-methionine = N(omega),N(omega)'-dimethyl-L-arginyl-[protein] + 2 S-adenosyl-L-homocysteine + 2 H(+). Arginine methyltransferase involved in the assembly or stability of mitochondrial NADH:ubiquinone oxidoreductase complex (complex I). The polypeptide is Protein arginine methyltransferase NDUFAF7 homolog, mitochondrial (Schizosaccharomyces pombe (strain 972 / ATCC 24843) (Fission yeast)).